The following is a 311-amino-acid chain: Large ribosomal subunit protein uL22 (311 aa).

This sequence belongs to the universal ribosomal protein uL22 family. In terms of assembly, part of the 50S ribosomal subunit.

Its function is as follows. This protein binds specifically to 23S rRNA; its binding is stimulated by other ribosomal proteins, e.g. L4, L17, and L20. It is important during the early stages of 50S assembly. It makes multiple contacts with different domains of the 23S rRNA in the assembled 50S subunit and ribosome. In terms of biological role, the globular domain of the protein is located near the polypeptide exit tunnel on the outside of the subunit, while an extended beta-hairpin is found that lines the wall of the exit tunnel in the center of the 70S ribosome. This Ureaplasma parvum serovar 3 (strain ATCC 27815 / 27 / NCTC 11736) protein is Large ribosomal subunit protein uL22 (rplV).